The primary structure comprises 983 residues: Glycine dehydrogenase (decarboxylating) (983 aa).

The residue at position 731 (lysine 731) is an N6-(pyridoxal phosphate)lysine.

It belongs to the GcvP family. As to quaternary structure, the glycine cleavage system is composed of four proteins: P, T, L and H. Pyridoxal 5'-phosphate is required as a cofactor.

The enzyme catalyses N(6)-[(R)-lipoyl]-L-lysyl-[glycine-cleavage complex H protein] + glycine + H(+) = N(6)-[(R)-S(8)-aminomethyldihydrolipoyl]-L-lysyl-[glycine-cleavage complex H protein] + CO2. In terms of biological role, the glycine cleavage system catalyzes the degradation of glycine. The P protein binds the alpha-amino group of glycine through its pyridoxal phosphate cofactor; CO(2) is released and the remaining methylamine moiety is then transferred to the lipoamide cofactor of the H protein. This chain is Glycine dehydrogenase (decarboxylating), found in Nostoc sp. (strain PCC 7120 / SAG 25.82 / UTEX 2576).